The following is a 227-amino-acid chain: Cytochrome c oxidase subunit 2 (227 aa).

Methionine 1 is modified (N-formylmethionine). The Mitochondrial intermembrane portion of the chain corresponds to 1-14 (MAYPMQLGFQDATS). Residues 15-45 (PIMEELLHFHDHTLMIVFLISSLVLYIISLM) form a helical membrane-spanning segment. Residues 46 to 59 (LTTKLTHTSTMDAQ) lie on the Mitochondrial matrix side of the membrane. A helical membrane pass occupies residues 60–87 (EVETIWTILPAIILILIALPSLRILYMM). The Mitochondrial intermembrane portion of the chain corresponds to 88 to 227 (DEINNPSLTV…YFEKWSASML (140 aa)). Residues histidine 161, cysteine 196, glutamate 198, cysteine 200, histidine 204, and methionine 207 each contribute to the Cu cation site. Glutamate 198 is a Mg(2+) binding site. At tyrosine 218 the chain carries Phosphotyrosine.

The protein belongs to the cytochrome c oxidase subunit 2 family. As to quaternary structure, component of the cytochrome c oxidase (complex IV, CIV), a multisubunit enzyme composed of 14 subunits. The complex is composed of a catalytic core of 3 subunits MT-CO1, MT-CO2 and MT-CO3, encoded in the mitochondrial DNA, and 11 supernumerary subunits COX4I, COX5A, COX5B, COX6A, COX6B, COX6C, COX7A, COX7B, COX7C, COX8 and NDUFA4, which are encoded in the nuclear genome. The complex exists as a monomer or a dimer and forms supercomplexes (SCs) in the inner mitochondrial membrane with NADH-ubiquinone oxidoreductase (complex I, CI) and ubiquinol-cytochrome c oxidoreductase (cytochrome b-c1 complex, complex III, CIII), resulting in different assemblies (supercomplex SCI(1)III(2)IV(1) and megacomplex MCI(2)III(2)IV(2)). Found in a complex with TMEM177, COA6, COX18, COX20, SCO1 and SCO2. Interacts with TMEM177 in a COX20-dependent manner. Interacts with COX20. Interacts with COX16. It depends on Cu cation as a cofactor.

It is found in the mitochondrion inner membrane. The catalysed reaction is 4 Fe(II)-[cytochrome c] + O2 + 8 H(+)(in) = 4 Fe(III)-[cytochrome c] + 2 H2O + 4 H(+)(out). Its function is as follows. Component of the cytochrome c oxidase, the last enzyme in the mitochondrial electron transport chain which drives oxidative phosphorylation. The respiratory chain contains 3 multisubunit complexes succinate dehydrogenase (complex II, CII), ubiquinol-cytochrome c oxidoreductase (cytochrome b-c1 complex, complex III, CIII) and cytochrome c oxidase (complex IV, CIV), that cooperate to transfer electrons derived from NADH and succinate to molecular oxygen, creating an electrochemical gradient over the inner membrane that drives transmembrane transport and the ATP synthase. Cytochrome c oxidase is the component of the respiratory chain that catalyzes the reduction of oxygen to water. Electrons originating from reduced cytochrome c in the intermembrane space (IMS) are transferred via the dinuclear copper A center (CU(A)) of subunit 2 and heme A of subunit 1 to the active site in subunit 1, a binuclear center (BNC) formed by heme A3 and copper B (CU(B)). The BNC reduces molecular oxygen to 2 water molecules using 4 electrons from cytochrome c in the IMS and 4 protons from the mitochondrial matrix. This chain is Cytochrome c oxidase subunit 2 (MT-CO2), found in Bos indicus (Zebu).